The sequence spans 268 residues: uncharacterized protein (268 aa).

This is an uncharacterized protein from Metamycoplasma hominis (strain ATCC 23114 / DSM 25592 / NBRC 14850 / NCTC 10111 / PG21) (Mycoplasma hominis).